The chain runs to 179 residues: UPF0227 protein PM0825 (179 aa).

It belongs to the UPF0227 family.

This Pasteurella multocida (strain Pm70) protein is UPF0227 protein PM0825.